The following is a 244-amino-acid chain: Phosphoadenosine 5'-phosphosulfate reductase (244 aa).

Residue cysteine 239 is the Nucleophile; cysteine thiosulfonate intermediate of the active site.

The protein belongs to the PAPS reductase family. CysH subfamily.

It is found in the cytoplasm. The enzyme catalyses [thioredoxin]-disulfide + sulfite + adenosine 3',5'-bisphosphate + 2 H(+) = [thioredoxin]-dithiol + 3'-phosphoadenylyl sulfate. Its pathway is sulfur metabolism; hydrogen sulfide biosynthesis; sulfite from sulfate: step 3/3. Catalyzes the formation of sulfite from phosphoadenosine 5'-phosphosulfate (PAPS) using thioredoxin as an electron donor. This is Phosphoadenosine 5'-phosphosulfate reductase from Shigella dysenteriae serotype 1 (strain Sd197).